Consider the following 185-residue polypeptide: Ribosome-recycling factor (185 aa).

Belongs to the RRF family.

It is found in the cytoplasm. In terms of biological role, responsible for the release of ribosomes from messenger RNA at the termination of protein biosynthesis. May increase the efficiency of translation by recycling ribosomes from one round of translation to another. The chain is Ribosome-recycling factor from Streptococcus sanguinis (strain SK36).